We begin with the raw amino-acid sequence, 265 residues long: MLDESSSSDESRATELPVSSEDECEEVTDAKVLPNKVLVVFEGESTLFRDQLLDTVFGVQDQGNIVKQLSWDTKYYAVEYDLYVDECVDIHGWLNEVNSDDYEELRDLLTMIIIVRSFDSTQDTKEYNSVLYDFIQGNSVSVISVNTNSARQVKDTYDEFLELDASSIEFINYHDDRVEKETNECKGMARLKEIIDTHPWTDCKVVLKNKESTSDKVNKPDLEYLIDTLKKAKIHYQKLSNGSDGFSEEAEQFALQMATDIANNL.

The tract at residues 1 to 21 (MLDESSSSDESRATELPVSSE) is disordered.

Belongs to the IRC6 family.

Involved in gross chromosomal rearrangements (GCRs) and telomere healing. The chain is Increased recombination centers protein 6 (IRC6) from Candida glabrata (strain ATCC 2001 / BCRC 20586 / JCM 3761 / NBRC 0622 / NRRL Y-65 / CBS 138) (Yeast).